The sequence spans 302 residues: uncharacterized protein (302 aa).

3 disordered regions span residues 81–100, 155–209, and 269–302; these read ETSDWDSPASPPVTGAERAA, TVTG…PVNP, and LRIESGSSPGKRPLDDPDEVPSSKRGPSRRALLN. Residues 196-209 are compositionally biased toward low complexity; that stretch reads PSLPSSLVSSPVNP.

This is an uncharacterized protein from Ictalurid herpesvirus 1 (strain Auburn) (IcHV-1).